Consider the following 297-residue polypeptide: uncharacterized protein (297 aa).

WD repeat units lie at residues 12-51 (KAKEPINVVKYNRTGKYVLAAGNERVVRLWNVKSGACIHE), 54-93 (GHGHEILDLDLVYDSTKFASCGGDKFIQVWDVNTGKVDRR), 96-135 (GHLAQINTIRYNEDSSILASGSFDSKVRLWDCRSNSFSPI), 140-177 (DAKDSVSSIDIAEHLIVTGSTDGTLRTYDIRKGTLSSD), 179-217 (FSHPITSVKTSKSASFSLISSLNSSIHLLDQETGKILKS), 222-261 (KNMEYRVRSSFNQSETIVFSGSEDGKVYLWDLENETQITS), and 265-297 (VGTPIVTDISCHPTMDDFIIATVHGDLFIYQYN).

This sequence belongs to the WD repeat MORG1 family.

Its subcellular location is the cytoplasm. The protein localises to the nucleus. This is an uncharacterized protein from Schizosaccharomyces pombe (strain 972 / ATCC 24843) (Fission yeast).